Here is a 227-residue protein sequence, read N- to C-terminus: Ion-translocating oxidoreductase complex subunit E (227 aa).

A run of 5 helical transmembrane segments spans residues 34–56 (AINAIGLGMTTTLVLTITNTIIS), 68–88 (IPIYMMIISSVVTSIEMLLHA), 91–111 (FNLYQSLGIFIPLIVTNCIIV), 127–147 (FFDGIFIGLGSMFAMFAVGSI), and 181–201 (TIILAVFPPGGFLILGFLIAI).

Belongs to the NqrDE/RnfAE family. As to quaternary structure, the complex is composed of six subunits: RnfA, RnfB, RnfC, RnfD, RnfE and RnfG.

Its subcellular location is the cell inner membrane. Functionally, part of a membrane-bound complex that couples electron transfer with translocation of ions across the membrane. The sequence is that of Ion-translocating oxidoreductase complex subunit E from Buchnera aphidicola subsp. Acyrthosiphon pisum (strain APS) (Acyrthosiphon pisum symbiotic bacterium).